Here is a 63-residue protein sequence, read N- to C-terminus: Large ribosomal subunit protein uL29 (63 aa).

Belongs to the universal ribosomal protein uL29 family.

The protein is Large ribosomal subunit protein uL29 of Aliivibrio fischeri (strain ATCC 700601 / ES114) (Vibrio fischeri).